Consider the following 592-residue polypeptide: Sodium- and chloride-dependent transporter XTRP3 (592 aa).

Residues 1 to 5 (MEKAR) lie on the Cytoplasmic side of the membrane. A helical membrane pass occupies residues 6 to 26 (PLWANSLQFVFACISYAVGLG). Residues 27 to 42 (NVWRFPYLCQMYGGGS) lie on the Extracellular side of the membrane. A helical membrane pass occupies residues 43–63 (FLVPYIIMLIVEGMPLLYLEL). At 64–79 (AVGQRMRQGSIGAWRT) the chain is on the cytoplasmic side. The helical transmembrane segment at 80 to 100 (ISPYLSGVGVASVVVSFFLSM) threads the bilayer. Topologically, residues 101–165 (YYNVINAWAF…ISPSLQENGG (65 aa)) are extracellular. Asparagine 131 carries an N-linked (GlcNAc...) asparagine glycan. A helical transmembrane segment spans residues 166–186 (VQWEPALCLLLAWLVVYLCIL). The Cytoplasmic segment spans residues 187–194 (RGTESTGK). Residues 195–215 (VVYFTASLPYCVLIIYLIRGL) form a helical membrane-spanning segment. The Extracellular portion of the chain corresponds to 216-241 (TLHGATNGLMYMFTPKIEQLANPKAW). The chain crosses the membrane as a helical span at residues 242-262 (INAATQIFFSLGLGFGSLIAF). Residues 263-276 (ASYNEPSNNCQKHA) lie on the Cytoplasmic side of the membrane. Residues 277–297 (IIVSLINSFTSIFASIVTFSI) traverse the membrane as a helical segment. Residues 298–389 (YGFKATFNYE…EAIKNMEVSQ (92 aa)) are Extracellular-facing. Asparagine 357 carries N-linked (GlcNAc...) asparagine glycosylation. A helical transmembrane segment spans residues 390–410 (LWSVLYFFMLLMLGIGSMLGN). Over 411-431 (TAAILTPLTDSKIISSHLPKE) the chain is Cytoplasmic. Residues 432 to 452 (AISGLVCLVNCAIGMVFTMEA) form a helical membrane-spanning segment. Topologically, residues 453–465 (GNYWFDIFNDYAA) are extracellular. Residues 466 to 486 (TLSLLLIVLVETIAVCYVYGL) form a helical membrane-spanning segment. The Cytoplasmic segment spans residues 487–504 (RRFESDLKAMTGRAVSWY). A helical transmembrane segment spans residues 505–525 (WKVMWAGVSPLLIVSLFVFYL). The Extracellular portion of the chain corresponds to 526–554 (SDYILTGTLKYQAWDASQGQLVTKDYPAY). Residues 555-575 (ALAVIGLLVASSTMCIPLAAL) form a helical membrane-spanning segment. The Cytoplasmic portion of the chain corresponds to 576 to 592 (GTFVQRRLKRGDADPVA).

This sequence belongs to the sodium:neurotransmitter symporter (SNF) (TC 2.A.22) family. SLC6A20 subfamily. In terms of tissue distribution, kidney and small intestine. Expressed in the S3 segment of the proximal tubule. Expressed in neurons.

It localises to the apical cell membrane. The catalysed reaction is L-proline(out) + chloride(out) + 2 Na(+)(out) = L-proline(in) + chloride(in) + 2 Na(+)(in). The enzyme catalyses L-pipecolate(out) + chloride(out) + 2 Na(+)(out) = L-pipecolate(in) + chloride(in) + 2 Na(+)(in). It catalyses the reaction sarcosine(out) + chloride(out) + 2 Na(+)(out) = sarcosine(in) + chloride(in) + 2 Na(+)(in). It carries out the reaction N-methyl-L-proline(out) + chloride(out) + 2 Na(+)(out) = N-methyl-L-proline(in) + chloride(in) + 2 Na(+)(in). The catalysed reaction is 2-methyl-2-(methylamino)propanoate(out) + chloride(out) + 2 Na(+)(out) = 2-methyl-2-(methylamino)propanoate(in) + chloride(in) + 2 Na(+)(in). The enzyme catalyses glycine betaine(out) + chloride(out) + 2 Na(+)(out) = glycine betaine(in) + chloride(in) + 2 Na(+)(in). It catalyses the reaction glycine(out) + chloride(out) + 2 Na(+)(out) = glycine(in) + chloride(in) + 2 Na(+)(in). In terms of biological role, mediates the Na(+)- and Cl(-)-dependent uptake of imino acids such as L-proline, N-methyl-L-proline and pipecolate as well as N-methylated amino acids. Also transports glycine, regulates proline and glycine homeostasis in the brain playing a role in the modulation of NMDAR currents. This Homo sapiens (Human) protein is Sodium- and chloride-dependent transporter XTRP3.